The primary structure comprises 270 residues: Tryptophan synthase alpha chain (270 aa).

Active-site proton acceptor residues include Glu49 and Asp60.

Belongs to the TrpA family. As to quaternary structure, tetramer of two alpha and two beta chains.

It catalyses the reaction (1S,2R)-1-C-(indol-3-yl)glycerol 3-phosphate + L-serine = D-glyceraldehyde 3-phosphate + L-tryptophan + H2O. It participates in amino-acid biosynthesis; L-tryptophan biosynthesis; L-tryptophan from chorismate: step 5/5. Functionally, the alpha subunit is responsible for the aldol cleavage of indoleglycerol phosphate to indole and glyceraldehyde 3-phosphate. The protein is Tryptophan synthase alpha chain of Marinobacter nauticus (strain ATCC 700491 / DSM 11845 / VT8) (Marinobacter aquaeolei).